We begin with the raw amino-acid sequence, 256 residues long: Acetylglutamate kinase (256 aa).

Substrate is bound by residues 40–41, R62, and N153; that span reads GG.

This sequence belongs to the acetylglutamate kinase family. ArgB subfamily.

The protein resides in the cytoplasm. The enzyme catalyses N-acetyl-L-glutamate + ATP = N-acetyl-L-glutamyl 5-phosphate + ADP. It participates in amino-acid biosynthesis; L-arginine biosynthesis; N(2)-acetyl-L-ornithine from L-glutamate: step 2/4. Functionally, catalyzes the ATP-dependent phosphorylation of N-acetyl-L-glutamate. This is Acetylglutamate kinase from Bacillus cytotoxicus (strain DSM 22905 / CIP 110041 / 391-98 / NVH 391-98).